Reading from the N-terminus, the 167-residue chain is DNA-directed RNA polymerase II subunit rpb-9 (167 aa).

The segment at 28-49 (DDMYDQNGASPAPSQNEKPGKS) is disordered. Residues 34–44 (NGASPAPSQNE) show a composition bias toward polar residues. Zn(2+) contacts are provided by Cys59, Cys62, Cys81, Cys84, Cys128, Cys131, Cys156, and Cys161. A C4-type zinc finger spans residues 59–84 (CPECNNMLYPREDKESRVLMYSCRNC). A TFIIS-type zinc finger spans residues 124–166 (EEHQCPVCGKSKAVFFQAQTKKAEEEMRLYYVCASQDCQHRWT).

It belongs to the archaeal RpoM/eukaryotic RPA12/RPB9/RPC11 RNA polymerase family. In terms of assembly, component of the RNA polymerase II (Pol II) complex consisting of 12 subunits. As to expression, expressed in the soma and in the germline.

The protein localises to the nucleus. It localises to the nucleolus. Functionally, DNA-dependent RNA polymerase catalyzes the transcription of DNA into RNA using the four ribonucleoside triphosphates as substrates. Component of RNA polymerase II which synthesizes mRNA precursors and many functional non-coding RNAs. Pol II is the central component of the basal RNA polymerase II transcription machinery. It is composed of mobile elements that move relative to each other. RPB9 is part of the upper jaw surrounding the central large cleft and thought to grab the incoming DNA template. Recruits ints-6, a component of the Integrator complex to PIWI-interacting RNA (piRNA) genes, to mediate Integrator complex-dependent cleavage of 3' ends of nascent transcripts upon RNA Pol II backtracking to terminate transcription and generate piRNA precursors. Promotes the biogenesis of secondary 22G-siRNAs (a class of 22 nucleotide siRNAs that possess a triphosphorylated guanine residue at the 5'-end). Involved in gene silencing mediated by a class of 21 nucleotide piRNAs that possess a uracil residue at the 5'-end (also called 21U-RNAs) and guide the Piwi protein prg-1 to its DNA targets for silencing. Plays a role in small RNA-directed transgenerational epigenetic inheritance (also called RNAe) over several generations. Not required for the transgenerational inheritance of exogenous small interfering RNAs (RNAi). May play a role in the silencing of the DNA transposable elements from the DNA transposon families, Chapaev-2 and CEMUDR1. The protein is DNA-directed RNA polymerase II subunit rpb-9 of Caenorhabditis elegans.